The chain runs to 143 residues: 3-dehydroquinate dehydratase (143 aa).

Tyrosine 22 functions as the Proton acceptor in the catalytic mechanism. 3 residues coordinate substrate: asparagine 73, histidine 79, and aspartate 86. Histidine 99 acts as the Proton donor in catalysis. Residues 100 to 101 (LS) and arginine 110 each bind substrate.

This sequence belongs to the type-II 3-dehydroquinase family. As to quaternary structure, homododecamer.

It carries out the reaction 3-dehydroquinate = 3-dehydroshikimate + H2O. The protein operates within metabolic intermediate biosynthesis; chorismate biosynthesis; chorismate from D-erythrose 4-phosphate and phosphoenolpyruvate: step 3/7. Functionally, catalyzes a trans-dehydration via an enolate intermediate. This chain is 3-dehydroquinate dehydratase, found in Salinispora tropica (strain ATCC BAA-916 / DSM 44818 / JCM 13857 / NBRC 105044 / CNB-440).